Consider the following 150-residue polypeptide: Cytochrome c oxidase subunit 5A, mitochondrial (150 aa).

The N-terminal 41 residues, 1–41, are a transit peptide targeting the mitochondrion; sequence MLGAALRRCAVAATTWAGPRGLLHSARTPGPAAAIQSVRCY. An SIFI-degron motif is present at residues 2-17; the sequence is LGAALRRCAVAATTWA. 2 positions are modified to N6-acetyllysine: K87 and K113. T141 carries the phosphothreonine modification.

This sequence belongs to the cytochrome c oxidase subunit 5A family. In terms of assembly, component of the cytochrome c oxidase (complex IV, CIV), a multisubunit enzyme composed of 14 subunits. The complex is composed of a catalytic core of 3 subunits MT-CO1, MT-CO2 and MT-CO3, encoded in the mitochondrial DNA, and 11 supernumerary subunits COX4I, COX5A, COX5B, COX6A, COX6B, COX6C, COX7A, COX7B, COX7C, COX8 and NDUFA4, which are encoded in the nuclear genome. The complex exists as a monomer or a dimer and forms supercomplexes (SCs) in the inner mitochondrial membrane with NADH-ubiquinone oxidoreductase (complex I, CI) and ubiquinol-cytochrome c oxidoreductase (cytochrome b-c1 complex, complex III, CIII), resulting in different assemblies (supercomplex SCI(1)III(2)IV(1) and megacomplex MCI(2)III(2)IV(2)). Interacts with AFG1L. Interacts with RAB5IF. In response to mitochondrial stress, the precursor protein is ubiquitinated by the SIFI complex in the cytoplasm before mitochondrial import, leading to its degradation. Within the SIFI complex, UBR4 initiates ubiquitin chain that are further elongated or branched by KCMF1.

The protein resides in the mitochondrion inner membrane. It participates in energy metabolism; oxidative phosphorylation. Component of the cytochrome c oxidase, the last enzyme in the mitochondrial electron transport chain which drives oxidative phosphorylation. The respiratory chain contains 3 multisubunit complexes succinate dehydrogenase (complex II, CII), ubiquinol-cytochrome c oxidoreductase (cytochrome b-c1 complex, complex III, CIII) and cytochrome c oxidase (complex IV, CIV), that cooperate to transfer electrons derived from NADH and succinate to molecular oxygen, creating an electrochemical gradient over the inner membrane that drives transmembrane transport and the ATP synthase. Cytochrome c oxidase is the component of the respiratory chain that catalyzes the reduction of oxygen to water. Electrons originating from reduced cytochrome c in the intermembrane space (IMS) are transferred via the dinuclear copper A center (CU(A)) of subunit 2 and heme A of subunit 1 to the active site in subunit 1, a binuclear center (BNC) formed by heme A3 and copper B (CU(B)). The BNC reduces molecular oxygen to 2 water molecules using 4 electrons from cytochrome c in the IMS and 4 protons from the mitochondrial matrix. In Papio anubis (Olive baboon), this protein is Cytochrome c oxidase subunit 5A, mitochondrial (COX5A).